The primary structure comprises 322 residues: Serine protease Lpg1137 (322 aa).

S68 is an active-site residue.

The protein localises to the secreted. It localises to the host mitochondrion membrane. Its function is as follows. Serine protease effector that inhibits host cell autophagy by targeting SNX17. Localizes to the host endoplasmic reticulum-mitochondria contact site and catalyzes degradation of host SNX17, thereby impairing endoplasmic reticulum-mitochondria communication, leading to inhibit autophagy as well as staurosporine-induced apoptosis. The protein is Serine protease Lpg1137 of Legionella pneumophila subsp. pneumophila (strain Philadelphia 1 / ATCC 33152 / DSM 7513).